The primary structure comprises 194 residues: ATP-dependent Clp protease proteolytic subunit 3 (194 aa).

Residue Ser-96 is the Nucleophile of the active site. His-121 is an active-site residue.

This sequence belongs to the peptidase S14 family. As to quaternary structure, fourteen ClpP subunits assemble into 2 heptameric rings which stack back to back to give a disk-like structure with a central cavity, resembling the structure of eukaryotic proteasomes.

Its subcellular location is the cytoplasm. It catalyses the reaction Hydrolysis of proteins to small peptides in the presence of ATP and magnesium. alpha-casein is the usual test substrate. In the absence of ATP, only oligopeptides shorter than five residues are hydrolyzed (such as succinyl-Leu-Tyr-|-NHMec, and Leu-Tyr-Leu-|-Tyr-Trp, in which cleavage of the -Tyr-|-Leu- and -Tyr-|-Trp bonds also occurs).. Functionally, cleaves peptides in various proteins in a process that requires ATP hydrolysis. Has a chymotrypsin-like activity. Plays a major role in the degradation of misfolded proteins. In Rhizobium etli (strain ATCC 51251 / DSM 11541 / JCM 21823 / NBRC 15573 / CFN 42), this protein is ATP-dependent Clp protease proteolytic subunit 3.